Here is a 439-residue protein sequence, read N- to C-terminus: Trigger factor (439 aa).

Residues 163-248 (GDIAVIDFEG…LNQIKERVLP (86 aa)) enclose the PPIase FKBP-type domain.

This sequence belongs to the FKBP-type PPIase family. Tig subfamily.

It localises to the cytoplasm. The catalysed reaction is [protein]-peptidylproline (omega=180) = [protein]-peptidylproline (omega=0). Its function is as follows. Involved in protein export. Acts as a chaperone by maintaining the newly synthesized protein in an open conformation. Functions as a peptidyl-prolyl cis-trans isomerase. In Syntrophotalea carbinolica (strain DSM 2380 / NBRC 103641 / GraBd1) (Pelobacter carbinolicus), this protein is Trigger factor.